We begin with the raw amino-acid sequence, 182 residues long: Dual-action ribosomal maturation protein DarP (182 aa).

It belongs to the DarP family.

Its subcellular location is the cytoplasm. Its function is as follows. Member of a network of 50S ribosomal subunit biogenesis factors which assembles along the 30S-50S interface, preventing incorrect 23S rRNA structures from forming. Promotes peptidyl transferase center (PTC) maturation. This chain is Dual-action ribosomal maturation protein DarP, found in Yersinia pestis.